We begin with the raw amino-acid sequence, 56 residues long: MAKKGATLLVKLVSSEGTGYFYVKKRDPKKLVQKLSFRKYDPVARKHVLFKEEKLR.

It belongs to the bacterial ribosomal protein bL33 family.

This Anaplasma phagocytophilum (strain HZ) protein is Large ribosomal subunit protein bL33.